The sequence spans 23 residues: Unknown protein NF005 from 2D-PAGE (23 aa).

The tract at residues 1–23 is disordered; it reads AGKARKQLSKNEDTKLKEQYIXD. Residues 9–23 are compositionally biased toward basic and acidic residues; it reads SKNEDTKLKEQYIXD.

This chain is Unknown protein NF005 from 2D-PAGE, found in Naegleria fowleri (Brain eating amoeba).